A 318-amino-acid chain; its full sequence is Olfactory receptor 13C9 (318 aa).

Residues 1–25 lie on the Extracellular side of the membrane; sequence MEWENQTILVEFFLKGHSVHPRLEL. Residue asparagine 5 is glycosylated (N-linked (GlcNAc...) asparagine). The helical transmembrane segment at 26–46 threads the bilayer; the sequence is LFFVLIFIMYVVILLGNGTLI. At 47–54 the chain is on the cytoplasmic side; that stretch reads LISILDPH. A helical membrane pass occupies residues 55 to 75; sequence LHTPMYFFLGNLSFLDICYTT. Topologically, residues 76-99 are extracellular; the sequence is TSIPSTLVSFLSERKTISFSGCAV. Cysteine 97 and cysteine 189 are disulfide-bonded. Residues 100-120 traverse the membrane as a helical segment; sequence QMFLGLAMGTTECVLLGMMAF. At 121-139 the chain is on the cytoplasmic side; the sequence is DRYVAICNPLRYPIIMSKN. A helical membrane pass occupies residues 140–160; sequence AYVPMAVGSWFAGIVNSAVQT. The Extracellular portion of the chain corresponds to 161-197; sequence TFVVQLPFCRKNVINHFSCEILAVMKLACADISGNEF. Residues 198-217 traverse the membrane as a helical segment; it reads LMLVATILFTLMPLLLIVIS. At 218–237 the chain is on the cytoplasmic side; it reads YSLIISSILKIHSSEGRSKA. A helical transmembrane segment spans residues 238–258; the sequence is FSTCSAHLTVVIIFYGTILFM. Residues 259–277 lie on the Extracellular side of the membrane; sequence YMKPKSKETLNSDDLDATD. The chain crosses the membrane as a helical span at residues 278–298; the sequence is KIISMFYGVMTPMMNPLIYSL. Topologically, residues 299–318 are cytoplasmic; that stretch reads RNKDVKEAVKHLPNRRFFSK.

Belongs to the G-protein coupled receptor 1 family.

Its subcellular location is the cell membrane. Its function is as follows. Odorant receptor. This chain is Olfactory receptor 13C9 (OR13C9), found in Homo sapiens (Human).